Reading from the N-terminus, the 215-residue chain is Large ribosomal subunit protein uL16 (215 aa).

This sequence belongs to the universal ribosomal protein uL16 family. As to quaternary structure, component of the small ribosomal subunit. Mature ribosomes consist of a small (40S) and a large (60S) subunit. The 40S subunit contains about 33 different proteins and 1 molecule of RNA (18S). The 60S subunit contains about 49 different proteins and 3 molecules of RNA (25S, 5.8S and 5S).

The polypeptide is Large ribosomal subunit protein uL16 (RPL10) (Euglena gracilis).